Consider the following 213-residue polypeptide: mRNA-decapping protein OPG121 (213 aa).

Residues Glu16 and Arg50 each contribute to the N(7)-methyl-GTP site. One can recognise a Nudix hydrolase domain in the interval 30–209 (KDTHVFAACI…EYLSYIYNML (180 aa)). The short motif at 111 to 132 (GKLDKKESIKDCLRRELKEESD) is the Nudix box element. Residue Glu126 is the Nucleophile of the active site. Mg(2+)-binding residues include Glu126 and Glu130. A N(7)-methyl-GTP-binding site is contributed by Asp151. Residue Glu183 coordinates Mg(2+).

It belongs to the Nudix hydrolase family. Requires Mg(2+) as cofactor. Mn(2+) serves as cofactor.

The enzyme catalyses a 5'-end (N(7)-methyl 5'-triphosphoguanosine)-guanosine in mRNA + H2O = a 5'-end phospho-guanosine in mRNA + N(7)-methyl-GDP + 2 H(+). Decapping enzyme that remove the protective 5'-cap from both host and viral mRNAs to commit transcripts for decay by the cellular exonuclease XRN1. Accelerates viral and cellular mRNA turnover to eliminate competing host mRNAs and allow stage-specific synthesis of viral proteins. Acceleration of the turnover of cellular transcripts may even promote the shutoff of host protein synthesis. This is mRNA-decapping protein OPG121 (OPG121) from Vaccinia virus (strain Western Reserve) (VACV).